The chain runs to 226 residues: MYTLIIPAAGQGKRMGAGKNKLFLLINEVPIIVHTLRAFEKDKACKNIIMAINEEERPYFEELMQKYPVKKPVQFIQGGAERQDSVYNAIQHTSDVEYVLVHDGARPFVTNKVIQDVLTAAEKYGASICAVPVKDTVKKVEQGVVVETVERSQLKAVQTPQGFSVSLLLEAHRSAKQSCFLGTDDASLVERIGKQVGVVEGSYYNIKVTTPEDLLIAESFLHVQKK.

It belongs to the IspD/TarI cytidylyltransferase family. IspD subfamily.

The enzyme catalyses 2-C-methyl-D-erythritol 4-phosphate + CTP + H(+) = 4-CDP-2-C-methyl-D-erythritol + diphosphate. It functions in the pathway isoprenoid biosynthesis; isopentenyl diphosphate biosynthesis via DXP pathway; isopentenyl diphosphate from 1-deoxy-D-xylulose 5-phosphate: step 2/6. Its function is as follows. Catalyzes the formation of 4-diphosphocytidyl-2-C-methyl-D-erythritol from CTP and 2-C-methyl-D-erythritol 4-phosphate (MEP). The protein is 2-C-methyl-D-erythritol 4-phosphate cytidylyltransferase of Bacillus cereus (strain ATCC 10987 / NRS 248).